A 211-amino-acid chain; its full sequence is Fucoxanthin-chlorophyll a-c binding protein F, chloroplastic (211 aa).

The N-terminal 33 residues, Ala1–Met33, are a transit peptide targeting the chloroplast. 3 consecutive transmembrane segments (helical) span residues Ile75–Leu95, Ile116–Met136, and Gly177–Pro197.

The protein belongs to the fucoxanthin chlorophyll protein family. In terms of assembly, the LHC complex of chromophytic algae is composed of fucoxanthin, chlorophyll A and C bound non-covalently by fucoxanthin chlorophyll proteins (FCPs). The ratio of pigments in this LHC is; fucoxanthin: chlorophyll C: chlorophyll A; (0.6-1): (0.1-0.3): (1).

The protein resides in the plastid. The protein localises to the chloroplast thylakoid membrane. Functionally, the light-harvesting complex (LHC) functions as a light receptor, it captures and delivers excitation energy to photosystems with which it is closely associated. Energy is transferred from the carotenoid and chlorophyll C (or B) to chlorophyll A and the photosynthetic reaction centers where it is used to synthesize ATP and reducing power. This Macrocystis pyrifera (Giant kelp) protein is Fucoxanthin-chlorophyll a-c binding protein F, chloroplastic (FCPF).